A 1159-amino-acid polypeptide reads, in one-letter code: ATP-dependent helicase/deoxyribonuclease subunit B (1159 aa).

Belongs to the helicase family. AddB/RexB type 2 subfamily. In terms of assembly, heterodimer of AddA and RexB. Mg(2+) serves as cofactor.

In terms of biological role, the heterodimer acts as both an ATP-dependent DNA helicase and an ATP-dependent, dual-direction single-stranded exonuclease. Recognizes the chi site generating a DNA molecule suitable for the initiation of homologous recombination. This subunit has 5' -&gt; 3' nuclease activity but not helicase activity. The protein is ATP-dependent helicase/deoxyribonuclease subunit B of Leuconostoc mesenteroides subsp. mesenteroides (strain ATCC 8293 / DSM 20343 / BCRC 11652 / CCM 1803 / JCM 6124 / NCDO 523 / NBRC 100496 / NCIMB 8023 / NCTC 12954 / NRRL B-1118 / 37Y).